The sequence spans 466 residues: MAKTLYEKLFDAHVVYEAENETPLLYIDRHLVHEVTSPQAFDGLRAHGRPVRQPGKTFATMDHNVSTQTKDINACGEMARIQMQELIKNCKEFGVELYDLNHPYQGIVHVMGPEQGVTLPGMTIVCGDSHTATHGAFGALAFGIGTSEVEHVLATQTLKQGRAKTMKIEVQGKAAPGITAKDIVLAIIGKTGSAGGTGHVVEFCGEAIRDLSMEGRMTLCNMAIEMGAKAALVAPDETTFNYVKGRLHAPKGKDFDDAVAYWKTLQTDEGATFDTVVTLQAEEISPQVTWGTNPGQVISVNDNIPDPASFADPVERASAEKALAYMGLKPGIPLTEVAIDKVFIGSCTNSRIEDLRAAAEIAKGRKVAPGVQALVVPGSGPVKAQAEAEGLDKIFIEAGFEWRLPGCSMCLAMNNDRLNPGERCASTSNRNFEGRQGRGGRTHLVSPAMAAAAAVTGHFADIRNIK.

Residues Cys-347, Cys-407, and Cys-410 each contribute to the [4Fe-4S] cluster site.

This sequence belongs to the aconitase/IPM isomerase family. LeuC type 1 subfamily. As to quaternary structure, heterodimer of LeuC and LeuD. It depends on [4Fe-4S] cluster as a cofactor.

It carries out the reaction (2R,3S)-3-isopropylmalate = (2S)-2-isopropylmalate. Its pathway is amino-acid biosynthesis; L-leucine biosynthesis; L-leucine from 3-methyl-2-oxobutanoate: step 2/4. In terms of biological role, catalyzes the isomerization between 2-isopropylmalate and 3-isopropylmalate, via the formation of 2-isopropylmaleate. This Shigella flexneri protein is 3-isopropylmalate dehydratase large subunit.